Here is a 295-residue protein sequence, read N- to C-terminus: 33 kDa chaperonin (295 aa).

Disulfide bonds link cysteine 230–cysteine 232 and cysteine 264–cysteine 267.

Belongs to the HSP33 family. Post-translationally, under oxidizing conditions two disulfide bonds are formed involving the reactive cysteines. Under reducing conditions zinc is bound to the reactive cysteines and the protein is inactive.

Its subcellular location is the cytoplasm. Functionally, redox regulated molecular chaperone. Protects both thermally unfolding and oxidatively damaged proteins from irreversible aggregation. Plays an important role in the bacterial defense system toward oxidative stress. In Ectopseudomonas mendocina (strain ymp) (Pseudomonas mendocina), this protein is 33 kDa chaperonin.